The chain runs to 307 residues: Mitochondrial glycine transporter YMC1 (307 aa).

3 Solcar repeats span residues 26–106 (VKDL…MKRF), 121–204 (PQYY…LIAN), and 218–305 (PAWK…AMRL). 6 consecutive transmembrane segments (helical) span residues 29–49 (LLAG…FDTT), 83–103 (LTPL…NEAM), 118–138 (LSLP…SFLA), 183–203 (TILR…ALIA), 223–243 (CIFG…LDVI), and 277–298 (FFKG…TFAT).

It belongs to the mitochondrial carrier (TC 2.A.29) family.

Its subcellular location is the mitochondrion inner membrane. Functionally, secondary mitochondrial glycine transporter required for the biosynthesis of heme at high glycine concentrations. Imports the precursor glycine into the mitochondrial matrix, where it is condensed with succinyl-CoA to produce 5-aminolevulinate (ALA), the first step of heme biosynthesis. The sequence is that of Mitochondrial glycine transporter YMC1 from Saccharomyces cerevisiae (strain ATCC 204508 / S288c) (Baker's yeast).